A 201-amino-acid polypeptide reads, in one-letter code: Large ribosomal subunit protein uL4 (201 aa).

Residues 45-72 form a disordered region; sequence AQKTRAEVTGSGKKPWRQKGTGRARAGS.

Belongs to the universal ribosomal protein uL4 family. As to quaternary structure, part of the 50S ribosomal subunit.

Functionally, one of the primary rRNA binding proteins, this protein initially binds near the 5'-end of the 23S rRNA. It is important during the early stages of 50S assembly. It makes multiple contacts with different domains of the 23S rRNA in the assembled 50S subunit and ribosome. Its function is as follows. Forms part of the polypeptide exit tunnel. The chain is Large ribosomal subunit protein uL4 from Shewanella frigidimarina (strain NCIMB 400).